We begin with the raw amino-acid sequence, 549 residues long: Peptide transport periplasmic protein SapA (549 aa).

The signal sequence occupies residues 1–21 (MRLVLSSLIVIAGLLSSQATA).

Belongs to the bacterial solute-binding protein 5 family.

It localises to the periplasm. Involved in a peptide intake transport system that plays a role in the resistance to antimicrobial peptides. The protein is Peptide transport periplasmic protein SapA of Salmonella typhimurium (strain LT2 / SGSC1412 / ATCC 700720).